The primary structure comprises 407 residues: Tyrosine--tRNA ligase (407 aa).

Tyr-35 is a binding site for L-tyrosine. The 'HIGH' region signature appears at 40–49 (PTADSLHVGH). Tyr-168 and Gln-172 together coordinate L-tyrosine. Positions 228-232 (KMGKT) match the 'KMSKS' region motif. Residue Lys-231 participates in ATP binding. The region spanning 341–405 (NLLVDLLVKC…RGKKNFNRIV (65 aa)) is the S4 RNA-binding domain.

Belongs to the class-I aminoacyl-tRNA synthetase family. TyrS type 1 subfamily. As to quaternary structure, homodimer.

It is found in the cytoplasm. It catalyses the reaction tRNA(Tyr) + L-tyrosine + ATP = L-tyrosyl-tRNA(Tyr) + AMP + diphosphate + H(+). In terms of biological role, catalyzes the attachment of tyrosine to tRNA(Tyr) in a two-step reaction: tyrosine is first activated by ATP to form Tyr-AMP and then transferred to the acceptor end of tRNA(Tyr). This Clostridium botulinum (strain ATCC 19397 / Type A) protein is Tyrosine--tRNA ligase.